The following is a 1010-amino-acid chain: Protein CROWDED NUCLEI 4 (1010 aa).

Coiled-coil stretches lie at residues 82 to 350 and 404 to 763; these read LLLL…LIQN and EKEH…NLER. Short sequence motifs (nuclear localization signal) lie at residues 445 to 452 and 679 to 686; these read NRKTTMLE and LKRLDAER. Disordered stretches follow at residues 787 to 813, 839 to 937, and 966 to 994; these read GVSTVSNSEDGYNSSMERQNGLTPSSA, HYEE…TQTP, and DCSESPSEAGRKMGEETEDGDCNQTGINA. Over residues 849-863 the composition is skewed to basic and acidic residues; sequence EKLKLESSRREEKAY. 2 stretches are compositionally biased toward polar residues: residues 883 to 893 and 912 to 921; these read NTSGDETSEPS and TQSVISSPQN.

This sequence belongs to the CRWN family. Core component of the LINC complex which is composed of inner nuclear membrane SUN domain-containing proteins coupled to outer nuclear membrane WIP proteins, the nucleoskeletal CRWN/LINC proteins, and, possibly, KAKU4. Binds to KAKU4. Expressed at low levels in roots, leaves, flowers and flower stalks.

It localises to the nucleus membrane. The protein resides in the nucleus. It is found in the nucleoplasm. Its subcellular location is the nucleus lamina. The protein localises to the cytoplasm. In terms of biological role, component of SUN-protein-containing multivariate complexes also called LINC complexes which link the nucleoskeleton and cytoskeleton by providing versatile outer nuclear membrane attachment sites for cytoskeletal filaments. Required for nucleus structure organization (e.g. size and shape). Involved in the maintenance of interphase chromocenter integrity and organization. This chain is Protein CROWDED NUCLEI 4, found in Arabidopsis thaliana (Mouse-ear cress).